A 215-amino-acid chain; its full sequence is Peptide methionine sulfoxide reductase MsrA (215 aa).

Residue Cys-58 is part of the active site.

Belongs to the MsrA Met sulfoxide reductase family.

It carries out the reaction L-methionyl-[protein] + [thioredoxin]-disulfide + H2O = L-methionyl-(S)-S-oxide-[protein] + [thioredoxin]-dithiol. The catalysed reaction is [thioredoxin]-disulfide + L-methionine + H2O = L-methionine (S)-S-oxide + [thioredoxin]-dithiol. Has an important function as a repair enzyme for proteins that have been inactivated by oxidation. Catalyzes the reversible oxidation-reduction of methionine sulfoxide in proteins to methionine. The protein is Peptide methionine sulfoxide reductase MsrA of Pseudomonas savastanoi pv. phaseolicola (strain 1448A / Race 6) (Pseudomonas syringae pv. phaseolicola (strain 1448A / Race 6)).